The sequence spans 185 residues: Peptidyl-tRNA hydrolase (185 aa).

Tyr-14 is a binding site for tRNA. The Proton acceptor role is filled by His-19. 3 residues coordinate tRNA: Phe-64, Asn-66, and Asn-112.

It belongs to the PTH family. In terms of assembly, monomer.

The protein localises to the cytoplasm. It carries out the reaction an N-acyl-L-alpha-aminoacyl-tRNA + H2O = an N-acyl-L-amino acid + a tRNA + H(+). In terms of biological role, hydrolyzes ribosome-free peptidyl-tRNAs (with 1 or more amino acids incorporated), which drop off the ribosome during protein synthesis, or as a result of ribosome stalling. Functionally, catalyzes the release of premature peptidyl moieties from peptidyl-tRNA molecules trapped in stalled 50S ribosomal subunits, and thus maintains levels of free tRNAs and 50S ribosomes. The polypeptide is Peptidyl-tRNA hydrolase (Lactobacillus johnsonii (strain CNCM I-12250 / La1 / NCC 533)).